Here is a 536-residue protein sequence, read N- to C-terminus: SNW domain-containing protein 1 (536 aa).

The segment at 1–46 (MALTSFLPAPTQLSQDQLEAEEKARSQRSRQTSLVSSRREPPPYGY) is disordered. The residue at position 2 (alanine 2) is an N-acetylalanine. At serine 14 the chain carries Phosphoserine. Lysine 23 is covalently cross-linked (Glycyl lysine isopeptide (Lys-Gly) (interchain with G-Cter in SUMO2)). Residues 59-79 (GDGGAFPEIHVAQYPLDMGRK) form an interaction with PPIL1 region. Glycyl lysine isopeptide (Lys-Gly) (interchain with G-Cter in SUMO2) cross-links involve residues lysine 81, lysine 97, lysine 115, lysine 122, lysine 141, lysine 158, and lysine 170. The segment at 174-339 (AQYIRYTPSQ…KARERRAGIK (166 aa)) is SNW. A phosphoserine mark is found at serine 182 and serine 190. A Glycyl lysine isopeptide (Lys-Gly) (interchain with G-Cter in SUMO2) cross-link involves residue lysine 193. Residues 209 to 233 (PPRFKINKKIPRGPPSPPAPVMHSP) are disordered. Phosphoserine occurs at positions 224, 232, and 234. Glycyl lysine isopeptide (Lys-Gly) (interchain with G-Cter in SUMO2) cross-links involve residues lysine 240, lysine 258, lysine 286, lysine 339, lysine 344, lysine 416, and lysine 441. The disordered stretch occupies residues 311 to 386 (KMAQKEKEKH…RSKLQRNENR (76 aa)). Serine 446 carries the phosphoserine modification. Lysine 452 participates in a covalent cross-link: Glycyl lysine isopeptide (Lys-Gly) (interchain with G-Cter in SUMO2). Basic and acidic residues-rich tracts occupy residues 470-489 (NRFVPDKEFSGSDRRQRGRE) and 503-530 (KFLEEAKQHGGSKRPSDSSRPKEHEHEG). Residues 470–536 (NRFVPDKEFS…EHEGKKRRKE (67 aa)) are disordered. Serine 479 and serine 481 each carry phosphoserine. Lysine 509 is covalently cross-linked (Glycyl lysine isopeptide (Lys-Gly) (interchain with G-Cter in SUMO2)).

Belongs to the SNW family. As to quaternary structure, identified in the spliceosome C complex. Associates with U4/U6-U5 tri-small nuclear ribonucleoproteins (U4/U6-U5 tri-snRNPs). Component of the minor spliceosome, which splices U12-type introns. Interacts with SKI, SMAD2,SMAD3, RBPJ, RB1, PABPN1, MAGEA1, SIRT1, FOXN3, U2AF2, DAXX and ATP1B4. Interacts with PPIL1. Interacts with VDR and RXRA; preferentially associates with VDR:RXRA heterodimers. Interacts with NCOR2. Interacts with MAML1. Interacts with NOTCH1 NICD; the interaction involves multimerized NOTCH1 NICD. Forms a complex with NOTCH1 NICD and MAML1; the association is dissociated by RBPJ. Associates with positive transcription elongation factor b (P-TEFb). Component of the SNARP complex which consists at least of SNIP1, SNW1, THRAP3, BCLAF1 and PNN. In terms of assembly, (Microbial infection) Interacts with human papillomavirus type-16 (HPV16) E7 protein. (Microbial infection) Interacts with EBV EBNA2; EBNA2 competes with NCOR2 for interaction with SNW1.

Its subcellular location is the nucleus. Involved in pre-mRNA splicing as component of the spliceosome. As a component of the minor spliceosome, involved in the splicing of U12-type introns in pre-mRNAs. Required for the specific splicing of CDKN1A pre-mRNA; the function probably involves the recruitment of U2AF2 to the mRNA. May recruit PPIL1 to the spliceosome. May be involved in cyclin-D1/CCND1 mRNA stability through the SNARP complex which associates with both the 3'end of the CCND1 gene and its mRNA. Involved in transcriptional regulation. Modulates TGF-beta-mediated transcription via association with SMAD proteins, MYOD1-mediated transcription via association with PABPN1, RB1-mediated transcriptional repression, and retinoid-X receptor (RXR)- and vitamin D receptor (VDR)-dependent gene transcription in a cell line-specific manner probably involving coactivators NCOA1 and GRIP1. Is involved in NOTCH1-mediated transcriptional activation. Binds to multimerized forms of Notch intracellular domain (NICD) and is proposed to recruit transcriptional coactivators such as MAML1 to form an intermediate preactivation complex which associates with DNA-bound CBF-1/RBPJ to form a transcriptional activation complex by releasing SNW1 and redundant NOTCH1 NICD. Functionally, (Microbial infection) Is recruited by HIV-1 Tat to Tat:P-TEFb:TAR RNA complexes and is involved in Tat transcription by recruitment of MYC, MEN1 and TRRAP to the HIV promoter. In terms of biological role, (Microbial infection) Proposed to be involved in transcriptional activation by EBV EBNA2 of CBF-1/RBPJ-repressed promoters. This chain is SNW domain-containing protein 1 (SNW1), found in Homo sapiens (Human).